Reading from the N-terminus, the 806-residue chain is MDFINIEKKWQEFWWKNKSFEPKDDFNLPKKYILSMLPYPSGEIHMGHVRNYTIGDALARYYRLHHYNVLHPMGFDSFGMPAENAAIKHGIHPKTWTYENIEAMQKEFEALGFSFSKNREFATSDPDYTKFEQQFFIDLWEKGLIYRKKAMLNWCPNDKTVLANEQVIDGRCWRCDTEVVQKELYQYYLKITNYAEELLKDLETLEDHWPSQVLIMQKNWIGKSSGLQFGFKIADECLKACNGIQEIEVFTTRADTIYGVTYIAIAPEHPLVEHAIKRVSQEDSKIIKAILNTTQRERALEKKGAFLGIYAIHPLTKQKIPVWVANFALANYGSGALMGVPACDERDFEFANLYHIPIKVITQSLQNLPHTKEEVLKNSGEWSDLSSSVAREQIIAYFEKENLGKRVINYRLQDWGVSRQRYWGAPIPMIHCKHCGIVPETQLPVTLPEDIVIDGEGNPLEKHASWKFAQCPKCHKDALRETDTMDTFIQSSWYFLRYTTPKNQRENQAFDQNYLKYFMPVDTYIGGIEHAILHLLYARFFTKALRDLGYLHLDEPFKQLITQGMVLKDGAKMSKSKGNVVSPKEILKKYGADAARLFILFAAPPAKELEWNDSALEGAHRFIKRLYDKANAITPTTSKPEFKGVILNEAQKLARKKVYEALKKSHEIFNKTESTYAFNTLIASCMEALNALSAQNNERILCEGYFVLLQILEPIIPHTAWELSERLFKRENFKPIAIDESALMEDFMTLGLTINGKRRAELKVNINASKEEIIVLAKKELEKYLEKASVKKEIYVPNKLVNFVIA.

Residues 38-48 carry the 'HIGH' region motif; it reads PYPSGEIHMGH. The 'KMSKS' region motif lies at 572-576; sequence KMSKS. Lys575 lines the ATP pocket.

Belongs to the class-I aminoacyl-tRNA synthetase family.

It localises to the cytoplasm. The enzyme catalyses tRNA(Leu) + L-leucine + ATP = L-leucyl-tRNA(Leu) + AMP + diphosphate. The sequence is that of Leucine--tRNA ligase from Helicobacter pylori (strain HPAG1).